A 232-amino-acid chain; its full sequence is 7-cyano-7-deazaguanine synthase (232 aa).

Residue Phe8 to Leu18 participates in ATP binding. 4 residues coordinate Zn(2+): Cys189, Cys198, Cys201, and Cys204.

Belongs to the QueC family. It depends on Zn(2+) as a cofactor.

The catalysed reaction is 7-carboxy-7-deazaguanine + NH4(+) + ATP = 7-cyano-7-deazaguanine + ADP + phosphate + H2O + H(+). It functions in the pathway purine metabolism; 7-cyano-7-deazaguanine biosynthesis. Functionally, catalyzes the ATP-dependent conversion of 7-carboxy-7-deazaguanine (CDG) to 7-cyano-7-deazaguanine (preQ(0)). In Proteus mirabilis (strain HI4320), this protein is 7-cyano-7-deazaguanine synthase.